The sequence spans 300 residues: Estradiol 17-beta-dehydrogenase 11 (300 aa).

Residues 1-18 (MKILLDLLLLLPLLIVCC) form the signal peptide. Position 40-67 (40-67 (LITGAGHGIGRLTAYEFAKLKSKLVLWD)) interacts with NADP(+). Serine 172 contributes to the substrate binding site. Tyrosine 185 serves as the catalytic Proton acceptor. Lysine 189 serves as a coordination point for NADP(+).

The protein belongs to the short-chain dehydrogenases/reductases (SDR) family. 17-beta-HSD 3 subfamily.

It is found in the endoplasmic reticulum. Its subcellular location is the lipid droplet. The enzyme catalyses 17beta-estradiol + NAD(+) = estrone + NADH + H(+). The catalysed reaction is 17beta-estradiol + NADP(+) = estrone + NADPH + H(+). Its function is as follows. Can convert androstan-3-alpha,17-beta-diol (3-alpha-diol) to androsterone in vitro, suggesting that it may participate in androgen metabolism during steroidogenesis. May act by metabolizing compounds that stimulate steroid synthesis and/or by generating metabolites that inhibit it. Has no activity toward DHEA (dehydroepiandrosterone), or A-dione (4-androste-3,17-dione), and only a slight activity toward testosterone to A-dione. This Macaca fascicularis (Crab-eating macaque) protein is Estradiol 17-beta-dehydrogenase 11 (HSD17B11).